The chain runs to 394 residues: Elongation factor Tu (394 aa).

Residues 10–204 (KPHVNIGTIG…AVDSWIPLPE (195 aa)) enclose the tr-type G domain. Residues 19–26 (GHVDHGKT) are G1. A GTP-binding site is contributed by 19–26 (GHVDHGKT). Position 26 (T26) interacts with Mg(2+). The segment at 60–64 (GITIN) is G2. Residues 81–84 (DCPG) are G3. GTP is bound by residues 81-85 (DCPGH) and 136-139 (NKCD). Residues 136 to 139 (NKCD) form a G4 region. The segment at 174 to 176 (SGL) is G5.

Belongs to the TRAFAC class translation factor GTPase superfamily. Classic translation factor GTPase family. EF-Tu/EF-1A subfamily. In terms of assembly, monomer.

The protein resides in the cytoplasm. The catalysed reaction is GTP + H2O = GDP + phosphate + H(+). In terms of biological role, GTP hydrolase that promotes the GTP-dependent binding of aminoacyl-tRNA to the A-site of ribosomes during protein biosynthesis. The polypeptide is Elongation factor Tu (Ureaplasma urealyticum serovar 10 (strain ATCC 33699 / Western)).